The primary structure comprises 2542 residues: Talin-2 (2542 aa).

The FERM domain occupies 88–406 (RPQKIRMLDG…GYIDIILKKK (319 aa)). The segment at 312 to 406 (GVSFFLVKEK…GYIDIILKKK (95 aa)) is interaction with PIP5K1C. Residues Ser-428, Ser-449, Ser-623, and Ser-1023 each carry the phosphoserine modification. Tyr-1665 is subject to Phosphotyrosine. Residue Thr-1843 is modified to Phosphothreonine. The I/LWEQ domain occupies 2294-2533 (TEWVDPEDPT…QIRQQQYKFL (240 aa)).

As to quaternary structure, interacts directly with PIP5K1C.

It is found in the cytoplasm. Its subcellular location is the cell junction. It localises to the focal adhesion. The protein resides in the synapse. The protein localises to the cell membrane. It is found in the cytoskeleton. As a major component of focal adhesion plaques that links integrin to the actin cytoskeleton, may play an important role in cell adhesion. Recruits PIP5K1C to focal adhesion plaques and strongly activates its kinase activity. The chain is Talin-2 (TLN2) from Homo sapiens (Human).